The sequence spans 418 residues: Putative competence-damage inducible protein (418 aa).

This sequence belongs to the CinA family.

The sequence is that of Putative competence-damage inducible protein from Streptococcus gordonii (strain Challis / ATCC 35105 / BCRC 15272 / CH1 / DL1 / V288).